The primary structure comprises 559 residues: MFANMVSKLTSLQQELLSALLDSGVTKDVLLQALEDLDPSPSAFGVKLDSLQMSPSGSKLSDTDSKPVFHTLTNGHSKGKLSGDEGSEDGDDYDTPPILKELQSQNTEEAAEQRAEIERMLAEDPWRAARMIKGYMQQHNIPQREVVDVTGLNQSHLSQHLNKGTPMKTQKRAALYTWYVRKQREILRQFNQATQGSGATMLDKGNQDQVLLFFSEFSQSGQGMVQPGDDAAIEPACKKLRRNRFKWGPASQQILYQAYERQKNPSKEEREALVEECNRAECLQRGVSPSKAHGLGSNLVTEVRVYNWFANRRKEEAFRQKLAMDAYSGPAHSLNSLLSHSSPHHPQTSSSPPSKMQGVRYSQQGPGEVTSSTTINHHSSNAMSTSQSVLQQVSPGALDPSHSLLSPDAKMISVSGGGLPPVSTLTNIHASHHVHQQTPNLIMPLSGVMAIAQSLNTSQAQTVPVINSVAGSLAALQPVQFSQQLNSQHQQLMQQSSGHMSQQSFMASVSHSHMYPHKQEPPQYSHSSRFPPAMVVTDANSLSTLSSMSSSKQCPLQAW.

The segment at 1-35 is dimerization; the sequence is MFANMVSKLTSLQQELLSALLDSGVTKDVLLQALE. The HNF-p1 domain occupies 5–36; that stretch reads MVSKLTSLQQELLSALLDSGVTKDVLLQALED. The tract at residues 53–98 is disordered; it reads MSPSGSKLSDTDSKPVFHTLTNGHSKGKLSGDEGSEDGDDYDTPPI. Over residues 85–94 the composition is skewed to acidic residues; it reads EGSEDGDDYD. A POU-specific atypical domain is found at 100 to 195; it reads KELQSQNTEE…ILRQFNQATQ (96 aa). Residues 240–320 constitute a DNA-binding region (homeobox; HNF1-type); that stretch reads LRRNRFKWGP…NRRKEEAFRQ (81 aa). Low complexity-rich tracts occupy residues 334-354 and 370-381; these read LNSL…SPPS and TSSTTINHHSSN. The segment at 334 to 384 is disordered; it reads LNSLLSHSSPHHPQTSSSPPSKMQGVRYSQQGPGEVTSSTTINHHSSNAMS.

This sequence belongs to the HNF1 homeobox family. In terms of assembly, binds DNA as a dimer. Can form homodimer or heterodimer with HNF1-alpha. In terms of tissue distribution, during embryonic development, expressed dynamically in the developing hindbrain, kidney (pronephros), gut, liver and pancreas; expressed in both intermediate mesoderm (precursor to the kidney) and the caudal hindbrain (including rhombomeres r5 and r6) at 10 hpf with expression diminishing caudally by 14 hpf. Strongly expressed in adult kidney, gut, liver and swim bladder; weakly expressed in brain, eye, testis, ovary and heart.

It is found in the nucleus. Functionally, transcription factor that binds to the inverted palindrome 5'-GTTAATNATTAAC-3'. Required for induction of rhombomere r5/r6 gene expression in the hindbrain. The protein is Hepatocyte nuclear factor 1-beta-A (hnf1ba) of Danio rerio (Zebrafish).